A 256-amino-acid chain; its full sequence is Triosephosphate isomerase (256 aa).

12–14 (NWK) lines the substrate pocket. H99 serves as the catalytic Electrophile. E169 (proton acceptor) is an active-site residue. Residues G175, S214, and 235-236 (GG) each bind substrate.

Belongs to the triosephosphate isomerase family. As to quaternary structure, homodimer.

It localises to the cytoplasm. It carries out the reaction D-glyceraldehyde 3-phosphate = dihydroxyacetone phosphate. It participates in carbohydrate biosynthesis; gluconeogenesis. It functions in the pathway carbohydrate degradation; glycolysis; D-glyceraldehyde 3-phosphate from glycerone phosphate: step 1/1. In terms of biological role, involved in the gluconeogenesis. Catalyzes stereospecifically the conversion of dihydroxyacetone phosphate (DHAP) to D-glyceraldehyde-3-phosphate (G3P). This is Triosephosphate isomerase from Rhizobium meliloti (strain 1021) (Ensifer meliloti).